Consider the following 79-residue polypeptide: ATP synthase subunit c (79 aa).

2 helical membrane passes run 7 to 27 and 56 to 76; these read VSGM…GAGI and IGSA…LFLI.

This sequence belongs to the ATPase C chain family. F-type ATPases have 2 components, F(1) - the catalytic core - and F(0) - the membrane proton channel. F(1) has five subunits: alpha(3), beta(3), gamma(1), delta(1), epsilon(1). F(0) has three main subunits: a(1), b(2) and c(10-14). The alpha and beta chains form an alternating ring which encloses part of the gamma chain. F(1) is attached to F(0) by a central stalk formed by the gamma and epsilon chains, while a peripheral stalk is formed by the delta and b chains.

It localises to the cell membrane. Functionally, f(1)F(0) ATP synthase produces ATP from ADP in the presence of a proton or sodium gradient. F-type ATPases consist of two structural domains, F(1) containing the extramembraneous catalytic core and F(0) containing the membrane proton channel, linked together by a central stalk and a peripheral stalk. During catalysis, ATP synthesis in the catalytic domain of F(1) is coupled via a rotary mechanism of the central stalk subunits to proton translocation. Its function is as follows. Key component of the F(0) channel; it plays a direct role in translocation across the membrane. A homomeric c-ring of between 10-14 subunits forms the central stalk rotor element with the F(1) delta and epsilon subunits. The sequence is that of ATP synthase subunit c from Clostridium botulinum (strain Hall / ATCC 3502 / NCTC 13319 / Type A).